Here is a 319-residue protein sequence, read N- to C-terminus: Cytochrome f (319 aa).

Positions Met-1–Ala-35 are cleaved as a signal peptide. Residues Tyr-36, Cys-56, Cys-59, and His-60 each coordinate heme. The helical transmembrane segment at Ile-285 to Lys-305 threads the bilayer.

Belongs to the cytochrome f family. As to quaternary structure, the 4 large subunits of the cytochrome b6-f complex are cytochrome b6, subunit IV (17 kDa polypeptide, petD), cytochrome f and the Rieske protein, while the 4 small subunits are PetG, PetL, PetM and PetN. The complex functions as a dimer. It depends on heme as a cofactor.

It is found in the plastid. It localises to the chloroplast thylakoid membrane. Component of the cytochrome b6-f complex, which mediates electron transfer between photosystem II (PSII) and photosystem I (PSI), cyclic electron flow around PSI, and state transitions. The sequence is that of Cytochrome f from Chlorokybus atmophyticus (Soil alga).